The chain runs to 919 residues: Rho guanine nucleotide exchange factor 1 (919 aa).

Positions 39 to 230 constitute an RGSL domain; it reads DQNSQFQSLE…SLYMRHLGVR (192 aa). The disordered stretch occupies residues 247 to 402; it reads VMGNRRSDEP…PPGWRELVPS (156 aa). Basic and acidic residues predominate over residues 281–310; that stretch reads DCRHLKVEVDEKPGPADRKGSLGISSRDRT. The segment covering 363 to 379 has biased composition (acidic residues); it reads STEDNGETESPEPGDDG. Phosphoserine is present on Ser372. One can recognise a DH domain in the interval 414-603; the sequence is KRQEVISELL…REILHHVNQA (190 aa). One can recognise a PH domain in the interval 645-758; sequence KLVHEGPLTW…WCALITETAG (114 aa). Thr693 carries the phosphothreonine modification. Residue Tyr736 is modified to Phosphotyrosine; by JAK2. 2 disordered regions span residues 761 to 800 and 839 to 865; these read KVPA…PADA and TEED…PTHT. Positions 775-787 are enriched in low complexity; that stretch reads PSSTREPLLSSSE. Residues 864–893 adopt a coiled-coil conformation; that stretch reads HTQEVEENLLSLEVVIKQLEELEEEFCRLR. A Phosphoserine modification is found at Ser904.

Interacts with RHOA, GNA12 and GNA13. Homooligomerizes through the coiled coil region. Interacts with CTNNAL1. May interact with CCPG1. Post-translationally, phosphorylated by PKCA. Angiotensin-2 induced Tyr-736 phosphorylation is mediated by JAK2.

It is found in the cytoplasm. The protein localises to the membrane. Seems to play a role in the regulation of RhoA GTPase by guanine nucleotide-binding alpha-12 (GNA12) and alpha-13 (GNA13) subunits. Acts as a GTPase-activating protein (GAP) for GNA12 and GNA13, and as guanine nucleotide exchange factor (GEF) for RhoA GTPase. Activated G alpha 13/GNA13 stimulates the RhoGEF activity through interaction with the RGS-like domain. This GEF activity is inhibited by binding to activated GNA12. Mediates angiotensin-2-induced RhoA activation. In lymphoid follicles, may trigger activation of GNA13 as part of S1PR2-dependent signaling pathway that leads to inhibition of germinal center (GC) B cell growth and migration outside the GC niche. In Rattus norvegicus (Rat), this protein is Rho guanine nucleotide exchange factor 1 (Arhgef1).